The chain runs to 418 residues: Dihydrofolate synthase/folylpolyglutamate synthase (418 aa).

53 to 56 (GKGT) contributes to the ATP binding site. Residue serine 77 participates in Mg(2+) binding. 116–119 (TYFE) contributes to the 7,8-dihydropteroate binding site. A Mg(2+)-binding site is contributed by glutamate 140. 147-149 (LDA) lines the 7,8-dihydropteroate pocket. Mg(2+) is bound at residue histidine 167. ATP contacts are provided by asparagine 252, arginine 284, and aspartate 297.

It belongs to the folylpolyglutamate synthase family. As to quaternary structure, monomer. The cofactor is Mg(2+).

The enzyme catalyses 7,8-dihydropteroate + L-glutamate + ATP = 7,8-dihydrofolate + ADP + phosphate + H(+). It carries out the reaction (6S)-5,6,7,8-tetrahydrofolyl-(gamma-L-Glu)(n) + L-glutamate + ATP = (6S)-5,6,7,8-tetrahydrofolyl-(gamma-L-Glu)(n+1) + ADP + phosphate + H(+). It catalyses the reaction 10-formyltetrahydrofolyl-(gamma-L-Glu)(n) + L-glutamate + ATP = 10-formyltetrahydrofolyl-(gamma-L-Glu)(n+1) + ADP + phosphate + H(+). The catalysed reaction is (6R)-5,10-methylenetetrahydrofolyl-(gamma-L-Glu)(n) + L-glutamate + ATP = (6R)-5,10-methylenetetrahydrofolyl-(gamma-L-Glu)(n+1) + ADP + phosphate + H(+). It participates in cofactor biosynthesis; tetrahydrofolate biosynthesis; 7,8-dihydrofolate from 2-amino-4-hydroxy-6-hydroxymethyl-7,8-dihydropteridine diphosphate and 4-aminobenzoate: step 2/2. It functions in the pathway cofactor biosynthesis; tetrahydrofolylpolyglutamate biosynthesis. Its function is as follows. Functions in two distinct reactions of the de novo folate biosynthetic pathway. Catalyzes the addition of a glutamate residue to dihydropteroate (7,8-dihydropteroate or H2Pte) to form dihydrofolate (7,8-dihydrofolate monoglutamate or H2Pte-Glu). Also catalyzes successive additions of L-glutamate to tetrahydrofolate or 10-formyltetrahydrofolate or 5,10-methylenetetrahydrofolate, leading to folylpolyglutamate derivatives. The polypeptide is Dihydrofolate synthase/folylpolyglutamate synthase (folC) (Buchnera aphidicola subsp. Schizaphis graminum (strain Sg)).